Here is a 233-residue protein sequence, read N- to C-terminus: Small ribosomal subunit protein uS2 (233 aa).

Belongs to the universal ribosomal protein uS2 family.

The sequence is that of Small ribosomal subunit protein uS2 from Clostridium botulinum (strain Alaska E43 / Type E3).